A 632-amino-acid chain; its full sequence is RNA-binding post-transcriptional regulator csx1 (632 aa).

2 positions are modified to phosphoserine; by MAPK sty1: serine 42 and serine 54. Phosphoserine occurs at positions 67 and 69. 2 RRM domains span residues 85–167 (DTLW…WATG) and 182–261 (FSIF…VASP). Phosphoserine; by MAPK sty1 is present on serine 291. In terms of domain architecture, RRM 3 spans 297 to 369 (TTVFVGGLAS…SHIRLAWGHN (73 aa)). Serine 455 carries the post-translational modification Phosphoserine; by MAPK sty1. A disordered region spans residues 456–476 (PPPLSRSASISPTLSGSGSGL). A compositionally biased stretch (low complexity) spans 466 to 476 (SPTLSGSGSGL).

In terms of assembly, interacts with cip1 and cip2.

It is found in the cytoplasm. In terms of biological role, regulates global gene expression after oxidative stress. Interacts and stabilizes atf1 and pcr1 mRNAs after oxidative stress, thus controlling their turnover. This Schizosaccharomyces pombe (strain 972 / ATCC 24843) (Fission yeast) protein is RNA-binding post-transcriptional regulator csx1 (csx1).